The following is a 917-amino-acid chain: Isoleucine--tRNA ligase (917 aa).

The 'HIGH' region motif lies at 57–67 (PYANGNLHMGH). L-isoleucyl-5'-AMP is bound at residue glutamate 554. The 'KMSKS' region signature appears at 595–599 (KMSKS). Lysine 598 provides a ligand contact to ATP. Zn(2+) contacts are provided by cysteine 886, cysteine 889, cysteine 906, and cysteine 909.

It belongs to the class-I aminoacyl-tRNA synthetase family. IleS type 1 subfamily. Monomer. It depends on Zn(2+) as a cofactor.

Its subcellular location is the cytoplasm. It carries out the reaction tRNA(Ile) + L-isoleucine + ATP = L-isoleucyl-tRNA(Ile) + AMP + diphosphate. Functionally, catalyzes the attachment of isoleucine to tRNA(Ile). As IleRS can inadvertently accommodate and process structurally similar amino acids such as valine, to avoid such errors it has two additional distinct tRNA(Ile)-dependent editing activities. One activity is designated as 'pretransfer' editing and involves the hydrolysis of activated Val-AMP. The other activity is designated 'posttransfer' editing and involves deacylation of mischarged Val-tRNA(Ile). In Staphylococcus aureus (strain Mu3 / ATCC 700698), this protein is Isoleucine--tRNA ligase.